The sequence spans 116 residues: Putative transmembrane protein ORF116 (116 aa).

3 helical membrane-spanning segments follow: residues 20–40 (IVTL…AYAL), 53–73 (LLGG…TNSI), and 76–96 (FRGA…DVIN).

The protein resides in the host membrane. The protein is Putative transmembrane protein ORF116 of Acidianus bottle-shaped virus (isolate Italy/Pozzuoli) (ABV).